A 363-amino-acid polypeptide reads, in one-letter code: Trichocyst matrix protein T4-B (363 aa).

The first 17 residues, 1-17, serve as a signal peptide directing secretion; it reads MARSLTILAIVFAVATA. A propeptide spanning residues 18-52 is cleaved from the precursor; sequence RVTKSESPKEILAQVNKDSFGNSILSVLQLQLATG. Residues 85 to 119 are a coiled coil; it reads VAFEKIIADLEQEIAYHQTQIVALSNLRDSTTEAL. Residues 190-221 constitute a propeptide that is removed on maturation; sequence RFEKVQAKLMESKHALFKPLINALTQLASKVD. Positions 244–352 form a coiled coil; it reads ASLLATEERQ…EVLTQKLSAA (109 aa).

The protein belongs to the TMP family. In terms of processing, two components are produced by post-translational processing from the precursor peptide.

It is found in the trichocyst. Its function is as follows. Structural protein that crystallize inside the trichocyst matrix. In Paramecium tetraurelia, this protein is Trichocyst matrix protein T4-B (T4B).